A 503-amino-acid polypeptide reads, in one-letter code: Angiopoietin-4 (503 aa).

A signal peptide spans 1-24 (MLSQLAMLQGSLLLVVATMSVAQQ). Residues 84–238 (TQQVKQLEQA…RQSAALTNIE (155 aa)) adopt a coiled-coil conformation. Residues asparagine 96, asparagine 126, asparagine 140, asparagine 158, asparagine 247, asparagine 274, asparagine 311, asparagine 337, and asparagine 427 are each glycosylated (N-linked (GlcNAc...) asparagine). The Fibrinogen C-terminal domain maps to 282–502 (MAGEQVFQDC…ASRMMIRPLD (221 aa)). The cysteines at positions 291 and 320 are disulfide-linked. A disulfide bond links cysteine 444 and cysteine 457.

As to quaternary structure, homodimer; disulfide-linked. Interacts with TEK/TIE2. Highly expressed in the lung with much lower levels found in other tissues.

Its subcellular location is the secreted. In terms of biological role, binds to TEK/TIE2, modulating ANGPT1 signaling. Can induce tyrosine phosphorylation of TEK/TIE2. Promotes endothelial cell survival, migration and angiogenesis. The sequence is that of Angiopoietin-4 (ANGPT4) from Homo sapiens (Human).